We begin with the raw amino-acid sequence, 496 residues long: Probable uroporphyrinogen-III C-methyltransferase (496 aa).

The protein belongs to the precorrin methyltransferase family.

It carries out the reaction uroporphyrinogen III + 2 S-adenosyl-L-methionine = precorrin-2 + 2 S-adenosyl-L-homocysteine + H(+). Functionally, siroheme synthase involved in methionine biosynthesis. The protein is Probable uroporphyrinogen-III C-methyltransferase of Schizosaccharomyces pombe (strain 972 / ATCC 24843) (Fission yeast).